The sequence spans 224 residues: Uridylate kinase (224 aa).

9-10 (GS) contributes to the ATP binding site. UMP is bound at residue Gly43. ATP is bound by residues Gly44 and Arg48. UMP is bound by residues Asp65 and 113 to 119 (VVPGQTT). The ATP site is built by Thr139, Phe145, and Asp148.

It belongs to the UMP kinase family. Homohexamer.

It is found in the cytoplasm. The enzyme catalyses UMP + ATP = UDP + ADP. Its pathway is pyrimidine metabolism; CTP biosynthesis via de novo pathway; UDP from UMP (UMPK route): step 1/1. Inhibited by UTP. Its function is as follows. Catalyzes the reversible phosphorylation of UMP to UDP. The protein is Uridylate kinase of Methanocella arvoryzae (strain DSM 22066 / NBRC 105507 / MRE50).